The sequence spans 330 residues: Putative glycosyltransferase HI_0258 (330 aa).

Residues 1–31 (MTDRQTDRQTDRQTDRQTDRQTDRQTDRQTD) are compositionally biased toward basic and acidic residues. Positions 1–32 (MTDRQTDRQTDRQTDRQTDRQTDRQTDRQTDG) are disordered. UDP is bound by residues 44–49 (SSDHYY) and 140–141 (DV). Mn(2+) contacts are provided by D140, D142, and H270. 270–276 (HYCGPNK) lines the UDP pocket.

The protein belongs to the glycosyltransferase 8 family.

The sequence is that of Putative glycosyltransferase HI_0258 from Haemophilus influenzae (strain ATCC 51907 / DSM 11121 / KW20 / Rd).